Here is a 117-residue protein sequence, read N- to C-terminus: Ribosome-binding factor A (117 aa).

It belongs to the RbfA family. Monomer. Binds 30S ribosomal subunits, but not 50S ribosomal subunits or 70S ribosomes.

The protein resides in the cytoplasm. One of several proteins that assist in the late maturation steps of the functional core of the 30S ribosomal subunit. Associates with free 30S ribosomal subunits (but not with 30S subunits that are part of 70S ribosomes or polysomes). Required for efficient processing of 16S rRNA. May interact with the 5'-terminal helix region of 16S rRNA. The chain is Ribosome-binding factor A from Petrotoga mobilis (strain DSM 10674 / SJ95).